The chain runs to 630 residues: Threonine--tRNA ligase (630 aa).

The interval 1-137 (MKVLLIHSDY…PLSELSRKIT (137 aa)) is editing domain. Positions 207-506 (PHVKFITEKE…ADAGAPPMLP (300 aa)) are catalytic. Zn(2+) contacts are provided by Cys299, His351, and His475.

This sequence belongs to the class-II aminoacyl-tRNA synthetase family. Homodimer. Zn(2+) serves as cofactor.

It localises to the cytoplasm. It carries out the reaction tRNA(Thr) + L-threonine + ATP = L-threonyl-tRNA(Thr) + AMP + diphosphate + H(+). In terms of biological role, catalyzes the attachment of threonine to tRNA(Thr) in a two-step reaction: L-threonine is first activated by ATP to form Thr-AMP and then transferred to the acceptor end of tRNA(Thr). Also edits incorrectly charged L-seryl-tRNA(Thr). In Methanococcus aeolicus (strain ATCC BAA-1280 / DSM 17508 / OCM 812 / Nankai-3), this protein is Threonine--tRNA ligase.